A 183-amino-acid polypeptide reads, in one-letter code: Negative modulator of initiation of replication (183 aa).

The segment at 90-91 (AV) is interaction with DNA.

This sequence belongs to the SeqA family. As to quaternary structure, homodimer. Polymerizes to form helical filaments.

The protein resides in the cytoplasm. In terms of biological role, negative regulator of replication initiation, which contributes to regulation of DNA replication and ensures that replication initiation occurs exactly once per chromosome per cell cycle. Binds to pairs of hemimethylated GATC sequences in the oriC region, thus preventing assembly of replication proteins and re-initiation at newly replicated origins. Repression is relieved when the region becomes fully methylated. The polypeptide is Negative modulator of initiation of replication (Shewanella oneidensis (strain ATCC 700550 / JCM 31522 / CIP 106686 / LMG 19005 / NCIMB 14063 / MR-1)).